The following is a 177-amino-acid chain: LOB domain-containing protein 33 (177 aa).

An LOB domain is found at 6–108 (SSCGACKFLR…EEIEFLGSQM (103 aa)).

It belongs to the LOB domain-containing protein family. In terms of tissue distribution, expressed in roots.

The polypeptide is LOB domain-containing protein 33 (LBD33) (Arabidopsis thaliana (Mouse-ear cress)).